The following is a 338-amino-acid chain: Ketol-acid reductoisomerase (NADP(+)) (338 aa).

In terms of domain architecture, KARI N-terminal Rossmann spans 1 to 181 (MNVFYDKDAD…GGGRAGIIET (181 aa)). Residues 24–27 (YGSQ), Arg-47, and Ser-52 each bind NADP(+). Residue His-107 is part of the active site. Gly-133 provides a ligand contact to NADP(+). Residues 182-327 (NFREETETDL…AKLRAMMPWI (146 aa)) form the KARI C-terminal knotted domain. Residues Asp-190, Glu-194, Glu-226, and Glu-230 each contribute to the Mg(2+) site. Ser-251 contributes to the substrate binding site.

This sequence belongs to the ketol-acid reductoisomerase family. It depends on Mg(2+) as a cofactor.

The catalysed reaction is (2R)-2,3-dihydroxy-3-methylbutanoate + NADP(+) = (2S)-2-acetolactate + NADPH + H(+). The enzyme catalyses (2R,3R)-2,3-dihydroxy-3-methylpentanoate + NADP(+) = (S)-2-ethyl-2-hydroxy-3-oxobutanoate + NADPH + H(+). It participates in amino-acid biosynthesis; L-isoleucine biosynthesis; L-isoleucine from 2-oxobutanoate: step 2/4. The protein operates within amino-acid biosynthesis; L-valine biosynthesis; L-valine from pyruvate: step 2/4. Involved in the biosynthesis of branched-chain amino acids (BCAA). Catalyzes an alkyl-migration followed by a ketol-acid reduction of (S)-2-acetolactate (S2AL) to yield (R)-2,3-dihydroxy-isovalerate. In the isomerase reaction, S2AL is rearranged via a Mg-dependent methyl migration to produce 3-hydroxy-3-methyl-2-ketobutyrate (HMKB). In the reductase reaction, this 2-ketoacid undergoes a metal-dependent reduction by NADPH to yield (R)-2,3-dihydroxy-isovalerate. This is Ketol-acid reductoisomerase (NADP(+)) from Burkholderia lata (strain ATCC 17760 / DSM 23089 / LMG 22485 / NCIMB 9086 / R18194 / 383).